We begin with the raw amino-acid sequence, 366 residues long: N-acetyl-6-hydroxytryptophan oxidase ivoB (366 aa).

The signal sequence occupies residues 1–18 (MHLLSSLAALAAAITVAF). Residues Asn28 and Asn81 are each glycosylated (N-linked (GlcNAc...) asparagine). 2 residues coordinate Cu cation: His87 and His96. N-linked (GlcNAc...) asparagine glycans are attached at residues Asn114 and Asn121. His291 contributes to the Cu cation binding site. N-linked (GlcNAc...) asparagine glycosylation occurs at Asn319.

It belongs to the tyrosinase family. The cofactor is Cu(2+).

The protein operates within pigment biosynthesis. Its activity is regulated as follows. Activity is inhibited by 2,3-dihydroxynaphthalene, phenylhydrazine, diethyl dithiocarbamate and 8-hydroxyquinolene. Functionally, nonribosomal peptide synthetase; part of the pathway that mediates the biosynthesis of the gray-brown conidiophore pigment. The first step of the pathway is performed by the nonribosomal peptide synthetase ivoA that catalyzes ATP-dependent unidirectional stereoinversion of L-tryptophan to D-tryptophan with complete conversion. While the stereoinversion is catalyzed by the epimerization (E) domain of ivoA, the terminal condensation (C) domain stereoselectively hydrolyzes D-tryptophanyl-S-phosphopantetheine thioester and thus represents a non-canonical C domain function. D-tryptophan is acetylated, probably by an endogenous acetyltransferase. N-acetyltryptophan is further 6-hydroxylated into N-acetyl-6-hydroxytryptophan (AHT) by the cytochrome P450 monooxygenase ivoC. N-acetyl-6-hydroxytryptophan is substrate of the N-acetyl-6-hydroxytryptophan oxidase ivoB to produce the gray-brown conidiophore pigment. The polypeptide is N-acetyl-6-hydroxytryptophan oxidase ivoB (Emericella nidulans (strain FGSC A4 / ATCC 38163 / CBS 112.46 / NRRL 194 / M139) (Aspergillus nidulans)).